The following is a 213-amino-acid chain: Cytidylate kinase (213 aa).

7–15 provides a ligand contact to ATP; it reads GPAASGKGT.

The protein belongs to the cytidylate kinase family. Type 1 subfamily.

The protein localises to the cytoplasm. It carries out the reaction CMP + ATP = CDP + ADP. The catalysed reaction is dCMP + ATP = dCDP + ADP. The protein is Cytidylate kinase of Rhodospirillum rubrum (strain ATCC 11170 / ATH 1.1.1 / DSM 467 / LMG 4362 / NCIMB 8255 / S1).